We begin with the raw amino-acid sequence, 237 residues long: Putative glutathione-dependent formaldehyde-activating enzyme (237 aa).

In terms of domain architecture, CENP-V/GFA spans 38-152 (ITLICHCPPS…LGQSGGSEGE (115 aa)). Residues Cys-42, Cys-44, Cys-67, Cys-69, Cys-72, Cys-114, and Cys-117 each coordinate Zn(2+).

It belongs to the Gfa family. It depends on Zn(2+) as a cofactor.

It carries out the reaction S-(hydroxymethyl)glutathione = glutathione + formaldehyde. It functions in the pathway one-carbon metabolism; formaldehyde degradation; formate from formaldehyde (glutathione route): step 1/3. Catalyzes the condensation of formaldehyde and glutathione to S-hydroxymethylglutathione. This Sordaria macrospora (strain ATCC MYA-333 / DSM 997 / K(L3346) / K-hell) protein is Putative glutathione-dependent formaldehyde-activating enzyme.